The primary structure comprises 392 residues: DNA replication and repair protein RecF (392 aa).

An ATP-binding site is contributed by 30-37 (GPNAAGKT).

Belongs to the RecF family.

It localises to the cytoplasm. In terms of biological role, the RecF protein is involved in DNA metabolism; it is required for DNA replication and normal SOS inducibility. RecF binds preferentially to single-stranded, linear DNA. It also seems to bind ATP. This chain is DNA replication and repair protein RecF, found in Chloroflexus aurantiacus (strain ATCC 29364 / DSM 637 / Y-400-fl).